The sequence spans 43 residues: Potassium channel toxin gamma-KTx 4.11 (43 aa).

Disulfide bonds link Cys-5-Cys-23, Cys-11-Cys-34, Cys-20-Cys-39, and Cys-24-Cys-41.

Belongs to the ergtoxin family. Gamma-KTx 4 subfamily. In terms of tissue distribution, expressed by the venom gland.

Its subcellular location is the secreted. Functionally, reversibly blocks Kv11/ERG potassium channels. The polypeptide is Potassium channel toxin gamma-KTx 4.11 (Centruroides noxius (Mexican scorpion)).